We begin with the raw amino-acid sequence, 334 residues long: L-lactate dehydrogenase (334 aa).

Residues 1-22 (MASTKGKLIHEMVPSKERDPPH) are disordered. A compositionally biased stretch (basic and acidic residues) spans 8-22 (LIHEMVPSKERDPPH). Residues 31–59 (GQVG…VEDR) and R101 each bind NAD(+). Residues R108, N140, and R171 each coordinate substrate. N140 contacts NAD(+). H195 serves as the catalytic Proton acceptor. T250 lines the substrate pocket.

This sequence belongs to the LDH/MDH superfamily. LDH family. In terms of assembly, homotetramer.

It is found in the cytoplasm. It catalyses the reaction (S)-lactate + NAD(+) = pyruvate + NADH + H(+). It participates in fermentation; pyruvate fermentation to lactate; (S)-lactate from pyruvate: step 1/1. This Petromyzon marinus (Sea lamprey) protein is L-lactate dehydrogenase.